The following is a 189-amino-acid chain: NADH-quinone oxidoreductase subunit B (189 aa).

Residues Cys-39, Cys-40, Cys-104, and Cys-135 each coordinate [4Fe-4S] cluster.

The protein belongs to the complex I 20 kDa subunit family. In terms of assembly, NDH-1 is composed of 14 different subunits. Subunits NuoB, C, D, E, F, and G constitute the peripheral sector of the complex. [4Fe-4S] cluster is required as a cofactor.

Its subcellular location is the cell inner membrane. The enzyme catalyses a quinone + NADH + 5 H(+)(in) = a quinol + NAD(+) + 4 H(+)(out). Its function is as follows. NDH-1 shuttles electrons from NADH, via FMN and iron-sulfur (Fe-S) centers, to quinones in the respiratory chain. The immediate electron acceptor for the enzyme in this species is believed to be a menaquinone. Couples the redox reaction to proton translocation (for every two electrons transferred, four hydrogen ions are translocated across the cytoplasmic membrane), and thus conserves the redox energy in a proton gradient. This is NADH-quinone oxidoreductase subunit B from Chlorobaculum tepidum (strain ATCC 49652 / DSM 12025 / NBRC 103806 / TLS) (Chlorobium tepidum).